Consider the following 312-residue polypeptide: Olfactory receptor 14C36 (312 aa).

The Extracellular segment spans residues 1–23 (MPNSTTVMEFLLMRFSDVWTLQI). Asn-3 carries an N-linked (GlcNAc...) asparagine glycan. A helical membrane pass occupies residues 24 to 44 (LHSASFFMLYLVTLMGNILIV). At 45–52 (TVTTCDSS) the chain is on the cytoplasmic side. Residues 53 to 73 (LHMPMYFFLRNLSILDACYIS) form a helical membrane-spanning segment. The Extracellular segment spans residues 74-97 (VTVPTSCVNSLLDSTTISKAGCVA). Cys-95 and Cys-187 form a disulfide bridge. The helical transmembrane segment at 98 to 118 (QVFLVVFFVYVELLFLTIMAH) threads the bilayer. Over 119-137 (DRYVAVCQPLHYPVIVNSR) the chain is Cytoplasmic. Residues 138-158 (ICIQMTLASLLSGLVYAGMHT) form a helical membrane-spanning segment. Over 159 to 194 (GSTFQLPFCRSNVIHQFFCDIPSLLKLSCSDTFSNE) the chain is Extracellular. A helical transmembrane segment spans residues 195 to 215 (VMIVVSALGVGGGCFIFIIRS). At 216-235 (YIHIFSTVLGFPRGADRTKA) the chain is on the cytoplasmic side. Residues 236-256 (FSTCIPHILVVSVFLSSCSSV) traverse the membrane as a helical segment. At 257-269 (YLRPPAIPAATQD) the chain is on the extracellular side. The chain crosses the membrane as a helical span at residues 270 to 290 (LILSGFYSIMPPLFNPIIYSL). At 291–312 (RNKQIKVAIKKIMKRIFYSENV) the chain is on the cytoplasmic side.

Belongs to the G-protein coupled receptor 1 family.

Its subcellular location is the cell membrane. Functionally, odorant receptor. In Homo sapiens (Human), this protein is Olfactory receptor 14C36 (OR14C36).